Consider the following 41-residue polypeptide: Photosystem II reaction center protein Y (41 aa).

The helical transmembrane segment at Val-7–Ile-25 threads the bilayer.

It belongs to the PsbY family. As to quaternary structure, PSII is composed of 1 copy each of membrane proteins PsbA, PsbB, PsbC, PsbD, PsbE, PsbF, PsbH, PsbI, PsbJ, PsbK, PsbL, PsbM, PsbT, PsbX, PsbY, PsbZ, Psb30/Ycf12, peripheral proteins PsbO, CyanoQ (PsbQ), PsbU, PsbV and a large number of cofactors. It forms dimeric complexes.

Its subcellular location is the cellular thylakoid membrane. Its function is as follows. Loosely associated component of the core of photosystem II (PSII), it is not always seen in crystals. PSII is a light-driven water plastoquinone oxidoreductase, using light energy to abstract electrons from H(2)O, generating a proton gradient subsequently used for ATP formation. In Nostoc sp. (strain PCC 7120 / SAG 25.82 / UTEX 2576), this protein is Photosystem II reaction center protein Y.